The chain runs to 92 residues: Protein LSO2 (92 aa).

Basic and acidic residues-rich tracts occupy residues 1 to 10 (MGKRFSESAA) and 38 to 72 (EASK…ERDA). Residues 1-92 (MGKRFSESAA…KGGKGKRKMK (92 aa)) are disordered. Residues 17 to 80 (ARKRDQAHAK…DALLTAEEEQ (64 aa)) are a coiled coil.

Belongs to the CCDC124 family. Associates with translationally inactive ribosomes in the nonrotated state. LSO2 bridges the decoding sites of the small with the GTPase activating center (GAC) of the large subunit. This position allows accommodation of the DOM34-dependent ribosome recycling system, which splits LSO2-containing ribosomes.

Its subcellular location is the nucleus. It localises to the cytoplasm. Its function is as follows. Ribosome-binding protein involved in ribosome hibernation by associating with translationally inactive ribosomes. Required for translational recovery after starvation from stationary phase. May facilitate rapid translation reactivation by stabilizing the recycling-competent state of inactive ribosomes. This Saccharomyces cerevisiae (strain ATCC 204508 / S288c) (Baker's yeast) protein is Protein LSO2.